A 480-amino-acid chain; its full sequence is Aromatic-L-amino-acid decarboxylase (480 aa).

Methionine 1 bears the N-acetylmethionine mark. Repeat copies occupy residues 58–115 and 118–178. Residues 58–178 form a 2 X approximate tandem repeats region; the sequence is RDIEKIIMPG…AASPELTQAA (121 aa). Threonine 82 is a substrate binding site. The pyridoxal 5'-phosphate site is built by alanine 148 and serine 149. Histidine 192 lines the substrate pocket. The pyridoxal 5'-phosphate site is built by threonine 246 and asparagine 300. The residue at position 303 (lysine 303) is an N6-(pyridoxal phosphate)lysine.

This sequence belongs to the group II decarboxylase family. In terms of assembly, homodimer. Requires pyridoxal 5'-phosphate as cofactor.

It catalyses the reaction L-dopa + H(+) = dopamine + CO2. It carries out the reaction 5-hydroxy-L-tryptophan + H(+) = serotonin + CO2. The protein operates within catecholamine biosynthesis; dopamine biosynthesis; dopamine from L-tyrosine: step 2/2. Functionally, catalyzes the decarboxylation of L-3,4-dihydroxyphenylalanine (DOPA) to dopamine and L-5-hydroxytryptophan to serotonin. In Rattus norvegicus (Rat), this protein is Aromatic-L-amino-acid decarboxylase.